Consider the following 314-residue polypeptide: Ornithine carbamoyltransferase (314 aa).

Carbamoyl phosphate contacts are provided by residues 58–61 (STRT), Q85, R109, and 136–139 (HPAQ). L-ornithine is bound by residues N169, D233, and 237 to 238 (SM). Carbamoyl phosphate-binding positions include 273-274 (CL) and R301.

It belongs to the aspartate/ornithine carbamoyltransferase superfamily. OTCase family.

The protein resides in the cytoplasm. The enzyme catalyses carbamoyl phosphate + L-ornithine = L-citrulline + phosphate + H(+). It participates in amino-acid degradation; L-arginine degradation via ADI pathway; carbamoyl phosphate from L-arginine: step 2/2. In terms of biological role, reversibly catalyzes the transfer of the carbamoyl group from carbamoyl phosphate (CP) to the N(epsilon) atom of ornithine (ORN) to produce L-citrulline. This is Ornithine carbamoyltransferase from Staphylothermus marinus (strain ATCC 43588 / DSM 3639 / JCM 9404 / F1).